A 226-amino-acid polypeptide reads, in one-letter code: Agamous-like MADS-box protein AGL23 (226 aa).

The MADS-box domain maps to 6–66 (LGRRKVEIVK…GKVFSFGHPN (61 aa)). Positions 95 to 132 (VQMLNKSYTEVKAEVEKEQKNKQSRAQNERENENAEEW) form a coiled coil. The span at 108 to 127 (EVEKEQKNKQSRAQNERENE) shows a compositional bias: basic and acidic residues. The disordered stretch occupies residues 108–131 (EVEKEQKNKQSRAQNERENENAEE).

The protein localises to the nucleus. In terms of biological role, probable transcription factor that controls female gametophyte (megagametogenesis) development and chloroplast biogenesis during embryo development. In Arabidopsis thaliana (Mouse-ear cress), this protein is Agamous-like MADS-box protein AGL23.